We begin with the raw amino-acid sequence, 171 residues long: Lipoprotein signal peptidase (171 aa).

The next 4 helical transmembrane spans lie at 12-32, 42-62, 70-90, and 96-116; these read LAWL…KLYF, IVVI…AAFS, WQRW…VVWL, and NETW…GNLY. Active-site residues include Asp126 and Asp145. A helical membrane pass occupies residues 137–157; sequence YFPAFNVADSAITVGAVMLAL.

This sequence belongs to the peptidase A8 family.

Its subcellular location is the cell inner membrane. It catalyses the reaction Release of signal peptides from bacterial membrane prolipoproteins. Hydrolyzes -Xaa-Yaa-Zaa-|-(S,diacylglyceryl)Cys-, in which Xaa is hydrophobic (preferably Leu), and Yaa (Ala or Ser) and Zaa (Gly or Ala) have small, neutral side chains.. Its pathway is protein modification; lipoprotein biosynthesis (signal peptide cleavage). This protein specifically catalyzes the removal of signal peptides from prolipoproteins. In Pseudomonas putida (strain ATCC 47054 / DSM 6125 / CFBP 8728 / NCIMB 11950 / KT2440), this protein is Lipoprotein signal peptidase.